The chain runs to 71 residues: Sec-independent protein translocase protein TatA (71 aa).

Residues 1–21 (MGASPVQLLIVLFIAVLVFGG) traverse the membrane as a helical segment.

This sequence belongs to the TatA/E family. In terms of assembly, the Tat system comprises two distinct complexes: a TatABC complex, containing multiple copies of TatA, TatB and TatC subunits, and a separate TatA complex, containing only TatA subunits. Substrates initially bind to the TatABC complex, which probably triggers association of the separate TatA complex to form the active translocon.

The protein localises to the cell inner membrane. Part of the twin-arginine translocation (Tat) system that transports large folded proteins containing a characteristic twin-arginine motif in their signal peptide across membranes. TatA could form the protein-conducting channel of the Tat system. This Dichelobacter nodosus (strain VCS1703A) protein is Sec-independent protein translocase protein TatA.